The sequence spans 468 residues: Chromosomal replication initiator protein DnaA (468 aa).

Residues methionine 1–alanine 84 are domain I, interacts with DnaA modulators. Positions alanine 84 to serine 131 are domain II. The segment covering alanine 85–alanine 95 has biased composition (low complexity). A disordered region spans residues alanine 85 to proline 104. The tract at residues asparagine 132–alanine 348 is domain III, AAA+ region. ATP is bound by residues glycine 176, glycine 178, lysine 179, and threonine 180. Residues asparagine 349–serine 468 are domain IV, binds dsDNA.

It belongs to the DnaA family. In terms of assembly, oligomerizes as a right-handed, spiral filament on DNA at oriC.

Its subcellular location is the cytoplasm. In terms of biological role, plays an essential role in the initiation and regulation of chromosomal replication. ATP-DnaA binds to the origin of replication (oriC) to initiate formation of the DNA replication initiation complex once per cell cycle. Binds the DnaA box (a 9 base pair repeat at the origin) and separates the double-stranded (ds)DNA. Forms a right-handed helical filament on oriC DNA; dsDNA binds to the exterior of the filament while single-stranded (ss)DNA is stabiized in the filament's interior. The ATP-DnaA-oriC complex binds and stabilizes one strand of the AT-rich DNA unwinding element (DUE), permitting loading of DNA polymerase. After initiation quickly degrades to an ADP-DnaA complex that is not apt for DNA replication. Binds acidic phospholipids. Functionally, complements a temperature-sensitive E.coli mutant, the DnaA consensus is 5'-TT(A/T)TNCACA-3'. In Vibrio harveyi (Beneckea harveyi), this protein is Chromosomal replication initiator protein DnaA.